The following is a 292-amino-acid chain: 33 kDa chaperonin (292 aa).

2 disulfide bridges follow: Cys236–Cys238 and Cys269–Cys272.

The protein belongs to the HSP33 family. In terms of processing, under oxidizing conditions two disulfide bonds are formed involving the reactive cysteines. Under reducing conditions zinc is bound to the reactive cysteines and the protein is inactive.

The protein localises to the cytoplasm. Functionally, redox regulated molecular chaperone. Protects both thermally unfolding and oxidatively damaged proteins from irreversible aggregation. Plays an important role in the bacterial defense system toward oxidative stress. The sequence is that of 33 kDa chaperonin from Ruminiclostridium cellulolyticum (strain ATCC 35319 / DSM 5812 / JCM 6584 / H10) (Clostridium cellulolyticum).